The primary structure comprises 333 residues: Ornithine carbamoyltransferase (333 aa).

Carbamoyl phosphate is bound by residues 56-59 (STRT), Arg-107, and 134-137 (HPTQ). L-ornithine is bound by residues Asn-167, Asp-231, and 235–236 (SM). Carbamoyl phosphate-binding positions include 273-274 (CL) and Arg-318.

Belongs to the aspartate/ornithine carbamoyltransferase superfamily. OTCase family.

It is found in the cytoplasm. The catalysed reaction is carbamoyl phosphate + L-ornithine = L-citrulline + phosphate + H(+). It participates in amino-acid degradation; L-arginine degradation via ADI pathway; carbamoyl phosphate from L-arginine: step 2/2. In terms of biological role, reversibly catalyzes the transfer of the carbamoyl group from carbamoyl phosphate (CP) to the N(epsilon) atom of ornithine (ORN) to produce L-citrulline. The chain is Ornithine carbamoyltransferase from Clostridium botulinum (strain 657 / Type Ba4).